The following is a 177-amino-acid chain: Peptide methionine sulfoxide reductase MsrA 2 (177 aa).

The active site involves Cys-12.

Belongs to the MsrA Met sulfoxide reductase family.

The catalysed reaction is L-methionyl-[protein] + [thioredoxin]-disulfide + H2O = L-methionyl-(S)-S-oxide-[protein] + [thioredoxin]-dithiol. The enzyme catalyses [thioredoxin]-disulfide + L-methionine + H2O = L-methionine (S)-S-oxide + [thioredoxin]-dithiol. Its function is as follows. Has an important function as a repair enzyme for proteins that have been inactivated by oxidation. Catalyzes the reversible oxidation-reduction of methionine sulfoxide in proteins to methionine. The chain is Peptide methionine sulfoxide reductase MsrA 2 (msrA2) from Staphylococcus aureus (strain NCTC 8325 / PS 47).